The chain runs to 227 residues: UPF0173 metal-dependent hydrolase BCE33L4354 (227 aa).

Belongs to the UPF0173 family.

The polypeptide is UPF0173 metal-dependent hydrolase BCE33L4354 (Bacillus cereus (strain ZK / E33L)).